Consider the following 287-residue polypeptide: Urease accessory protein UreD (287 aa).

This sequence belongs to the UreD family. In terms of assembly, ureD, UreF and UreG form a complex that acts as a GTP-hydrolysis-dependent molecular chaperone, activating the urease apoprotein by helping to assemble the nickel containing metallocenter of UreC. The UreE protein probably delivers the nickel.

It is found in the cytoplasm. In terms of biological role, required for maturation of urease via the functional incorporation of the urease nickel metallocenter. This is Urease accessory protein UreD from Aliivibrio fischeri (strain ATCC 700601 / ES114) (Vibrio fischeri).